Reading from the N-terminus, the 245-residue chain is uncharacterized protein (245 aa).

Positions 1–20 (MIKQTIVALLLSVGASSVFA) are cleaved as a signal peptide.

The protein to E.coli YmcB.

This is an uncharacterized protein from Escherichia coli (strain K12).